The primary structure comprises 431 residues: Serine hydroxymethyltransferase (431 aa).

122-124 (GHI) provides a ligand contact to (6S)-5,6,7,8-tetrahydrofolate. Lys228 carries the post-translational modification N6-(pyridoxal phosphate)lysine. Position 245 (Glu245) interacts with (6S)-5,6,7,8-tetrahydrofolate.

The protein belongs to the SHMT family. Homodimer. The cofactor is pyridoxal 5'-phosphate.

It localises to the cytoplasm. It participates in amino-acid biosynthesis; glycine biosynthesis; glycine from L-serine: step 1/1. In terms of biological role, catalyzes the reversible interconversion of serine and glycine with a modified folate serving as the one-carbon carrier. Also exhibits a pteridine-independent aldolase activity toward beta-hydroxyamino acids, producing glycine and aldehydes, via a retro-aldol mechanism. This is Serine hydroxymethyltransferase from Thermococcus kodakarensis (strain ATCC BAA-918 / JCM 12380 / KOD1) (Pyrococcus kodakaraensis (strain KOD1)).